We begin with the raw amino-acid sequence, 94 residues long: Gibberellin-regulated protein 11 (94 aa).

Residues 1-23 (MAVFRVLLASLLISLLVLDFVHA) form the signal peptide.

It belongs to the GASA family. Post-translationally, six disulfide bonds may be present.

The protein localises to the secreted. Functionally, gibberellin-regulated protein that may function in hormonal controlled steps of development such as seed germination, flowering and seed maturation. The sequence is that of Gibberellin-regulated protein 11 (GASA11) from Arabidopsis thaliana (Mouse-ear cress).